The chain runs to 149 residues: Nucleoside diphosphate kinase (149 aa).

Residues lysine 9, phenylalanine 57, arginine 85, threonine 91, arginine 102, and asparagine 112 each contribute to the ATP site. Histidine 115 serves as the catalytic Pros-phosphohistidine intermediate.

Belongs to the NDK family. Homotetramer. The cofactor is Mg(2+).

The protein localises to the cytoplasm. The enzyme catalyses a 2'-deoxyribonucleoside 5'-diphosphate + ATP = a 2'-deoxyribonucleoside 5'-triphosphate + ADP. It catalyses the reaction a ribonucleoside 5'-diphosphate + ATP = a ribonucleoside 5'-triphosphate + ADP. Its function is as follows. Major role in the synthesis of nucleoside triphosphates other than ATP. The ATP gamma phosphate is transferred to the NDP beta phosphate via a ping-pong mechanism, using a phosphorylated active-site intermediate. This chain is Nucleoside diphosphate kinase, found in Synechocystis sp. (strain ATCC 27184 / PCC 6803 / Kazusa).